Consider the following 449-residue polypeptide: Tubulin alpha-1 chain (449 aa).

GTP contacts are provided by Gln11, Glu71, Ser140, Gly144, Thr145, Thr179, Asn206, and Asn228. Mg(2+) is bound at residue Glu71. Glu254 is an active-site residue.

It belongs to the tubulin family. In terms of assembly, dimer of alpha and beta chains. A typical microtubule is a hollow water-filled tube with an outer diameter of 25 nm and an inner diameter of 15 nM. Alpha-beta heterodimers associate head-to-tail to form protofilaments running lengthwise along the microtubule wall with the beta-tubulin subunit facing the microtubule plus end conferring a structural polarity. Microtubules usually have 13 protofilaments but different protofilament numbers can be found in some organisms and specialized cells. It depends on Mg(2+) as a cofactor.

It is found in the cytoplasm. The protein resides in the cytoskeleton. The enzyme catalyses GTP + H2O = GDP + phosphate + H(+). In terms of biological role, tubulin is the major constituent of microtubules, a cylinder consisting of laterally associated linear protofilaments composed of alpha- and beta-tubulin heterodimers. Microtubules grow by the addition of GTP-tubulin dimers to the microtubule end, where a stabilizing cap forms. Below the cap, tubulin dimers are in GDP-bound state, owing to GTPase activity of alpha-tubulin. The sequence is that of Tubulin alpha-1 chain (tubA) from Emericella nidulans (strain FGSC A4 / ATCC 38163 / CBS 112.46 / NRRL 194 / M139) (Aspergillus nidulans).